Reading from the N-terminus, the 24-residue chain is Lycosin-I (24 aa).

Belongs to the cationic peptide 04 (cupiennin) family. 05 subfamily. Monomer in solution. Small size oligomers on the lipid membranes.

It localises to the secreted. The protein resides in the target cell membrane. Functionally, antimicrobial peptide that inhibits many reference strains of bacteria and fungi. Is potent against Candida species and multidrug-resistant Acinetobacter baumannii (MDRAB). Is probably localized in the cytoplasm after being transported through the cell wall and membrane. Is able to interact with cell membranes and enter into cell plasma to activate the mitochondrial death pathway to sensitize cancer cells for apoptosis, as well as up-regulates p27 to inhibit cell proliferation. It shows very low effect on normal cells, such as erythrocytes, Hek293t cells. It also potently inhibits tumor cell growth in vitro, and suppresses various tumor growth in vivo when tested in human cancer xenograft models. It interacts with the cell membrane and is then internalized into the cytoplasm of cancer cells to initiate the programmable cell death. In addition, this peptide has the therapeutic effects of anti-hypertension by endothelium-dependent vasodilatation via the NO/sGC/cGMP signaling pathway. In vivo, this peptide also shows a significant ability to inhibit T.gondii invasion and proliferation, making it a potential alternative agent for the treatment of toxoplasmosis. The protein is Lycosin-I of Lycosa singoriensis (Wolf spider).